A 277-amino-acid polypeptide reads, in one-letter code: Shikimate dehydrogenase (NADP(+)) (277 aa).

Residues Ser-15–Ser-17 and Thr-62 each bind shikimate. The active-site Proton acceptor is Lys-66. Shikimate contacts are provided by Asn-87 and Asp-102. NADP(+) contacts are provided by residues Gly-127–Ala-131, Asn-151–Lys-156, and Ile-219. Tyr-221 lines the shikimate pocket. Residue Gly-242 coordinates NADP(+).

The protein belongs to the shikimate dehydrogenase family. As to quaternary structure, homodimer.

It catalyses the reaction shikimate + NADP(+) = 3-dehydroshikimate + NADPH + H(+). Its pathway is metabolic intermediate biosynthesis; chorismate biosynthesis; chorismate from D-erythrose 4-phosphate and phosphoenolpyruvate: step 4/7. Functionally, involved in the biosynthesis of the chorismate, which leads to the biosynthesis of aromatic amino acids. Catalyzes the reversible NADPH linked reduction of 3-dehydroshikimate (DHSA) to yield shikimate (SA). The chain is Shikimate dehydrogenase (NADP(+)) from Bacillus mycoides (strain KBAB4) (Bacillus weihenstephanensis).